Reading from the N-terminus, the 294-residue chain is Osteopontin (294 aa).

The signal sequence occupies residues 1–16 (MRLAVICFCLFGIASS). Phosphoserine occurs at positions 24, 26, 27, 61, 62, 75, 77, 80, 106, 109, 112, 115, and 118. The interval 42–274 (WLVPDPSQKQ…LVLDPKSKED (233 aa)) is disordered. A compositionally biased stretch (polar residues) spans 48 to 61 (SQKQNLLAPQNAVS). The segment covering 85 to 110 (DDDDDDDDDDGDHAESEDSVDSDESD) has biased composition (acidic residues). Polar residues predominate over residues 121-130 (TVTASTQADT). Residues Thr-123, Thr-132, and Thr-137 are each glycosylated (O-linked (GalNAc...) threonine). Residues 144-146 (RGD) carry the Cell attachment site motif. 2 positions are modified to phosphothreonine: Thr-170 and Thr-175. The span at 174-187 (LTSHMKSGESKESL) shows a compositional bias: basic and acidic residues. Ser-176, Ser-180, Ser-200, Ser-209, Ser-213, and Ser-219 each carry phosphoserine. Over residues 197–216 (SMPSDQDNNGKGSHESSQLD) the composition is skewed to polar residues. Ser-219 carries O-linked (Xyl...) (chondroitin sulfate) serine glycosylation. The span at 220-232 (LETHRLEHSKESQ) shows a compositional bias: basic and acidic residues. The residue at position 222 (Thr-222) is a Phosphothreonine. Ser-228, Ser-231, Ser-234, Ser-238, Ser-243, Ser-247, Ser-250, Ser-255, Ser-260, Ser-271, Ser-283, Ser-288, Ser-290, and Ser-291 each carry phosphoserine. Residues 234-249 (SADQSDVIDSQASSKA) are compositionally biased toward polar residues. Positions 263–274 (DKLVLDPKSKED) are enriched in basic and acidic residues. O-linked (Xyl...) (chondroitin sulfate) serine glycosylation is present at Ser-288.

Belongs to the osteopontin family. In terms of assembly, interacts (via N-terminus) with integrin ITGA9:ITGB1. Extensively phosphorylated by FAM20C in the extracellular medium at multiple sites within the S-x-E/pS motif. The phosphorylated form inhibits hydroxyapatite crystallization. Dephosphorylation via a mechanism involving ALPL/TNAP promotes hydroxyapatite crystallization. In terms of processing, O-glycosylated. Post-translationally, forms covalent cross-links mediated by transglutaminase TGM2, between a glutamine and the epsilon-amino group of a lysine residue, forming homopolymers and heteropolymers, increasing its collagen binding properties.

It localises to the secreted. In terms of biological role, major non-collagenous bone protein that binds tightly to hydroxyapatite. Appears to form an integral part of the mineralized matrix. Probably important to cell-matrix interaction. Its function is as follows. Acts as a cytokine involved in enhancing production of interferon-gamma and interleukin-12 and reducing production of interleukin-10 and is essential in the pathway that leads to type I immunity. This chain is Osteopontin (Spp1), found in Mus musculus (Mouse).